Reading from the N-terminus, the 209-residue chain is Leucyl/phenylalanyl-tRNA--protein transferase (209 aa).

This sequence belongs to the L/F-transferase family.

Its subcellular location is the cytoplasm. The enzyme catalyses N-terminal L-lysyl-[protein] + L-leucyl-tRNA(Leu) = N-terminal L-leucyl-L-lysyl-[protein] + tRNA(Leu) + H(+). The catalysed reaction is N-terminal L-arginyl-[protein] + L-leucyl-tRNA(Leu) = N-terminal L-leucyl-L-arginyl-[protein] + tRNA(Leu) + H(+). It catalyses the reaction L-phenylalanyl-tRNA(Phe) + an N-terminal L-alpha-aminoacyl-[protein] = an N-terminal L-phenylalanyl-L-alpha-aminoacyl-[protein] + tRNA(Phe). Its function is as follows. Functions in the N-end rule pathway of protein degradation where it conjugates Leu, Phe and, less efficiently, Met from aminoacyl-tRNAs to the N-termini of proteins containing an N-terminal arginine or lysine. In Paramagnetospirillum magneticum (strain ATCC 700264 / AMB-1) (Magnetospirillum magneticum), this protein is Leucyl/phenylalanyl-tRNA--protein transferase.